Here is a 546-residue protein sequence, read N- to C-terminus: Glucose-6-phosphate isomerase (546 aa).

The Proton donor role is filled by glutamate 353. Catalysis depends on residues histidine 384 and lysine 512.

Belongs to the GPI family.

It is found in the cytoplasm. It carries out the reaction alpha-D-glucose 6-phosphate = beta-D-fructose 6-phosphate. Its pathway is carbohydrate biosynthesis; gluconeogenesis. It functions in the pathway carbohydrate degradation; glycolysis; D-glyceraldehyde 3-phosphate and glycerone phosphate from D-glucose: step 2/4. Functionally, catalyzes the reversible isomerization of glucose-6-phosphate to fructose-6-phosphate. The protein is Glucose-6-phosphate isomerase of Actinobacillus pleuropneumoniae serotype 5b (strain L20).